The primary structure comprises 363 residues: Chorismate synthase (363 aa).

The segment at 36–58 is disordered; that stretch reads SESDIQGDLDRRRPGQSKITTPR. R47 is a binding site for NADP(+). FMN-binding positions include 124–126, G286, 301–305, and R327; these read RSS and KPTAT.

Belongs to the chorismate synthase family. In terms of assembly, homotetramer. FMNH2 serves as cofactor.

The catalysed reaction is 5-O-(1-carboxyvinyl)-3-phosphoshikimate = chorismate + phosphate. It participates in metabolic intermediate biosynthesis; chorismate biosynthesis; chorismate from D-erythrose 4-phosphate and phosphoenolpyruvate: step 7/7. Functionally, catalyzes the anti-1,4-elimination of the C-3 phosphate and the C-6 proR hydrogen from 5-enolpyruvylshikimate-3-phosphate (EPSP) to yield chorismate, which is the branch point compound that serves as the starting substrate for the three terminal pathways of aromatic amino acid biosynthesis. This reaction introduces a second double bond into the aromatic ring system. In Crocosphaera subtropica (strain ATCC 51142 / BH68) (Cyanothece sp. (strain ATCC 51142)), this protein is Chorismate synthase.